A 119-amino-acid chain; its full sequence is Holo-[acyl-carrier-protein] synthase (119 aa).

D8 and E58 together coordinate Mg(2+).

The protein belongs to the P-Pant transferase superfamily. AcpS family. The cofactor is Mg(2+).

It localises to the cytoplasm. The enzyme catalyses apo-[ACP] + CoA = holo-[ACP] + adenosine 3',5'-bisphosphate + H(+). Its function is as follows. Transfers the 4'-phosphopantetheine moiety from coenzyme A to a Ser of acyl-carrier-protein. The protein is Holo-[acyl-carrier-protein] synthase of Bacillus cereus (strain ZK / E33L).